The primary structure comprises 184 residues: ATP synthase subunit b (184 aa).

The helical transmembrane segment at I19–P39 threads the bilayer.

It belongs to the ATPase B chain family. As to quaternary structure, F-type ATPases have 2 components, F(1) - the catalytic core - and F(0) - the membrane proton channel. F(1) has five subunits: alpha(3), beta(3), gamma(1), delta(1), epsilon(1). F(0) has three main subunits: a(1), b(2) and c(10-14). The alpha and beta chains form an alternating ring which encloses part of the gamma chain. F(1) is attached to F(0) by a central stalk formed by the gamma and epsilon chains, while a peripheral stalk is formed by the delta and b chains.

The protein resides in the cell membrane. Functionally, f(1)F(0) ATP synthase produces ATP from ADP in the presence of a proton or sodium gradient. F-type ATPases consist of two structural domains, F(1) containing the extramembraneous catalytic core and F(0) containing the membrane proton channel, linked together by a central stalk and a peripheral stalk. During catalysis, ATP synthesis in the catalytic domain of F(1) is coupled via a rotary mechanism of the central stalk subunits to proton translocation. In terms of biological role, component of the F(0) channel, it forms part of the peripheral stalk, linking F(1) to F(0). This is ATP synthase subunit b from Cutibacterium acnes (strain DSM 16379 / KPA171202) (Propionibacterium acnes).